Reading from the N-terminus, the 28-residue chain is Dermaseptin-DI2 (28 aa).

Expressed by the skin glands.

It is found in the secreted. Its function is as follows. Has antibacterial activity against the Gram-positive bacteria S.aureus and E.faecalis, and the Gram-negative bacteria P.aeruginosa and E.coli. Has antiprotozoal activity against T.cruzi. Has antifungal activity against the yeasts C.tropicalis (MIC=10.9 uM), C.guilliermondii (MIC=21.8 uM), C.albicans (MIC=21.8 uM) and C.albicans ATCC 1023 (MIC=10.9 uM). Decreases viability of murine peritoneal cells. Fuses to, and disrupts liposomes. The protein is Dermaseptin-DI2 of Phyllomedusa distincta (Monkey frog).